The chain runs to 378 residues: Erythronate-4-phosphate dehydrogenase (378 aa).

Ser-45 and Thr-66 together coordinate substrate. NAD(+) contacts are provided by Asp-146 and Thr-175. The active site involves Arg-208. Asp-232 provides a ligand contact to NAD(+). Glu-237 is an active-site residue. The active-site Proton donor is the His-254. Gly-257 lines the NAD(+) pocket. Tyr-258 contributes to the substrate binding site.

It belongs to the D-isomer specific 2-hydroxyacid dehydrogenase family. PdxB subfamily. Homodimer.

The protein resides in the cytoplasm. It carries out the reaction 4-phospho-D-erythronate + NAD(+) = (R)-3-hydroxy-2-oxo-4-phosphooxybutanoate + NADH + H(+). The protein operates within cofactor biosynthesis; pyridoxine 5'-phosphate biosynthesis; pyridoxine 5'-phosphate from D-erythrose 4-phosphate: step 2/5. Catalyzes the oxidation of erythronate-4-phosphate to 3-hydroxy-2-oxo-4-phosphonooxybutanoate. This Escherichia coli O8 (strain IAI1) protein is Erythronate-4-phosphate dehydrogenase.